The primary structure comprises 352 residues: Protein RecA (352 aa).

Residue 65-72 (GPESSGKT) coordinates ATP.

Belongs to the RecA family.

Its subcellular location is the cytoplasm. Its function is as follows. Can catalyze the hydrolysis of ATP in the presence of single-stranded DNA, the ATP-dependent uptake of single-stranded DNA by duplex DNA, and the ATP-dependent hybridization of homologous single-stranded DNAs. It interacts with LexA causing its activation and leading to its autocatalytic cleavage. Plays a functional role in the DNA rearrangement associated with the phenotypic switching from a pathogenic smooth to a nonpathogenic rough form in this bacterium. In Pseudomonas tolaasii, this protein is Protein RecA.